A 170-amino-acid polypeptide reads, in one-letter code: MLENYQNLVWLGLSISKSVISLLEKRKLPWIMAKEEIRGPLPGYFKVSEMTISQEPKAKTRTLFGKDVPGAEIKELSAKRAINEVLSQFDTVIKCTRNVCKECGNLYCHNMQLTLHKRNHTQKKCNQCLDCGKYFTRQSTLIQHQRIHTGERPYKCNECIKTFNQRAHLT.

In terms of domain architecture, KRAB spans 1 to 42; sequence MLENYQNLVWLGLSISKSVISLLEKRKLPWIMAKEEIRGPLP. 2 consecutive C2H2-type zinc fingers follow at residues 98-120 and 126-148; these read NVCK…KRNH and NQCL…QRIH. The C2H2-type 3; degenerate zinc finger occupies 154–170; that stretch reads YKCNECIKTFNQRAHLT.

The protein belongs to the krueppel C2H2-type zinc-finger protein family.

The protein localises to the nucleus. Functionally, may be involved in transcriptional regulation. The polypeptide is Putative zinc finger protein 542 (ZNF542P) (Homo sapiens (Human)).